The following is an 89-amino-acid chain: MDNIVYVGNKGVMNYVLAVITQFNSENAQEVIVKARGKAISRAVDVEEMVTKRFMPEVKIKEINLGTDHIQGEDGKSINVSTIEIILFK.

The protein belongs to the histone-like Alba family.

It is found in the cytoplasm. The protein localises to the chromosome. In terms of biological role, binds double-stranded DNA tightly but without sequence specificity. Involved in DNA compaction. In Methanococcus maripaludis (strain DSM 14266 / JCM 13030 / NBRC 101832 / S2 / LL), this protein is DNA/RNA-binding protein Alba.